The primary structure comprises 700 residues: Small ribosomal subunit protein uS3c (700 aa).

2 insert regions span residues 88–196 (NCHM…LGKF) and 282–587 (KPCT…FQTR).

It belongs to the universal ribosomal protein uS3 family. In terms of assembly, part of the 30S ribosomal subunit.

The protein localises to the plastid. The protein resides in the chloroplast. This Tetradesmus obliquus (Green alga) protein is Small ribosomal subunit protein uS3c (rps3).